The chain runs to 248 residues: Murein peptide amidase A (248 aa).

The region spanning arginine 3–aspartate 245 is the Peptidase M14 domain. Residues histidine 60, glutamate 63, and histidine 168 each coordinate Zn(2+). Catalysis depends on glutamate 221, which acts as the Proton donor/acceptor.

It belongs to the peptidase M14 family. In terms of assembly, homodimer. Zn(2+) is required as a cofactor.

It localises to the cytoplasm. The enzyme catalyses L-alanyl-gamma-D-glutamyl-meso-2,6-diaminopimelate + H2O = L-alanyl-D-glutamate + meso-2,6-diaminopimelate. Its pathway is cell wall degradation; peptidoglycan degradation. Involved in muropeptide degradation. Catalyzes the hydrolysis of the gamma-D-glutamyl-diaminopimelic acid (gamma-D-Glu-Dap) amide bond in the murein tripeptide L-alanyl-gamma-D-glutamyl-meso-diaminopimelic acid, leading to the formation of L-Ala-gamma-D-Glu and Dap. Has weak activity with L-Ala-gamma-D-Glu-L-Lys, MurNAc-tripeptide and gamma-D-Glu-meso-Dap. Cannot hydrolyze murein tetrapeptide. The sequence is that of Murein peptide amidase A from Vibrio campbellii (strain ATCC BAA-1116).